We begin with the raw amino-acid sequence, 36 residues long: Pancreatic polypeptide (36 aa).

The residue at position 36 (Y36) is a Tyrosine amide.

This sequence belongs to the NPY family.

It is found in the secreted. Hormone secreted by pancreatic cells that acts as a regulator of pancreatic and gastrointestinal functions probably by signaling through the G protein-coupled receptor NPY4R2. This Oryctolagus cuniculus (Rabbit) protein is Pancreatic polypeptide (PPY).